Reading from the N-terminus, the 91-residue chain is Large ribosomal subunit protein bL27 (91 aa).

Residues M1 to G22 are disordered.

This sequence belongs to the bacterial ribosomal protein bL27 family.

The chain is Large ribosomal subunit protein bL27 from Methylocella silvestris (strain DSM 15510 / CIP 108128 / LMG 27833 / NCIMB 13906 / BL2).